We begin with the raw amino-acid sequence, 431 residues long: Glutamate-1-semialdehyde 2,1-aminomutase 1 (431 aa).

N6-(pyridoxal phosphate)lysine is present on Lys-268.

Belongs to the class-III pyridoxal-phosphate-dependent aminotransferase family. HemL subfamily. Homodimer. Pyridoxal 5'-phosphate is required as a cofactor.

Its subcellular location is the cytoplasm. The catalysed reaction is (S)-4-amino-5-oxopentanoate = 5-aminolevulinate. Its pathway is porphyrin-containing compound metabolism; protoporphyrin-IX biosynthesis; 5-aminolevulinate from L-glutamyl-tRNA(Glu): step 2/2. The protein is Glutamate-1-semialdehyde 2,1-aminomutase 1 of Anoxybacillus flavithermus (strain DSM 21510 / WK1).